Here is a 213-residue protein sequence, read N- to C-terminus: Octanoyltransferase (213 aa).

The 176-residue stretch at 32-207 folds into the BPL/LPL catalytic domain; that stretch reads NSTLDEIWLV…NILALLNNPD (176 aa). Substrate-binding positions include 71 to 78, 138 to 140, and 151 to 153; these read RGGQVTYH, SLG, and GLA. The active-site Acyl-thioester intermediate is Cys-169.

This sequence belongs to the LipB family.

The protein resides in the cytoplasm. It catalyses the reaction octanoyl-[ACP] + L-lysyl-[protein] = N(6)-octanoyl-L-lysyl-[protein] + holo-[ACP] + H(+). It functions in the pathway protein modification; protein lipoylation via endogenous pathway; protein N(6)-(lipoyl)lysine from octanoyl-[acyl-carrier-protein]: step 1/2. Functionally, catalyzes the transfer of endogenously produced octanoic acid from octanoyl-acyl-carrier-protein onto the lipoyl domains of lipoate-dependent enzymes. Lipoyl-ACP can also act as a substrate although octanoyl-ACP is likely to be the physiological substrate. The sequence is that of Octanoyltransferase from Shigella flexneri serotype 5b (strain 8401).